The primary structure comprises 486 residues: FAD-dependent oxidoreductase domain-containing protein 1 (486 aa).

Residues 66-86 (VVVVGGGVLGLSVAYWLKQLE) form a helical membrane-spanning segment.

Associates with components of the mitochondrial respiratory chain complex I. It depends on FAD as a cofactor.

It localises to the mitochondrion inner membrane. Functionally, required for the assembly of the mitochondrial membrane respiratory chain NADH dehydrogenase (Complex I). Involved in mid-late stages of complex I assembly. The polypeptide is FAD-dependent oxidoreductase domain-containing protein 1 (FOXRED1) (Macaca fascicularis (Crab-eating macaque)).